Reading from the N-terminus, the 184-residue chain is Adenine phosphoribosyltransferase (184 aa).

This sequence belongs to the purine/pyrimidine phosphoribosyltransferase family. Homodimer.

The protein resides in the cytoplasm. The catalysed reaction is AMP + diphosphate = 5-phospho-alpha-D-ribose 1-diphosphate + adenine. Its pathway is purine metabolism; AMP biosynthesis via salvage pathway; AMP from adenine: step 1/1. Catalyzes a salvage reaction resulting in the formation of AMP, that is energically less costly than de novo synthesis. This chain is Adenine phosphoribosyltransferase, found in Shewanella baltica (strain OS223).